The sequence spans 351 residues: UDP-N-acetylenolpyruvoylglucosamine reductase (351 aa).

In terms of domain architecture, FAD-binding PCMH-type spans 25–196 (HIQAQARWLL…AAVEFRLPLL (172 aa)). Arg173 is a catalytic residue. Ser246 acts as the Proton donor in catalysis. The active site involves Glu343.

This sequence belongs to the MurB family. It depends on FAD as a cofactor.

The protein localises to the cytoplasm. The catalysed reaction is UDP-N-acetyl-alpha-D-muramate + NADP(+) = UDP-N-acetyl-3-O-(1-carboxyvinyl)-alpha-D-glucosamine + NADPH + H(+). It functions in the pathway cell wall biogenesis; peptidoglycan biosynthesis. Its function is as follows. Cell wall formation. The protein is UDP-N-acetylenolpyruvoylglucosamine reductase of Xylella fastidiosa (strain 9a5c).